The primary structure comprises 736 residues: Gephyrin (736 aa).

The tract at residues 14 to 153 (QIRVGVLTVS…LPGSKKGSQE (140 aa)) is MPT Mo-transferase. Disordered stretches follow at residues 181 to 232 (DELE…DSSS) and 260 to 290 (TASL…PKVQ). Residues 187-199 (PSPPPPLSPPPTT) show a composition bias toward pro residues. Over residues 261–290 (ASLSTTPSESPRAQATSRLSTASCPTPKVQ) the composition is skewed to polar residues. The segment at 294 to 736 (SSKENILRAS…VVDVMVIGRL (443 aa)) is MPT adenylyltransferase.

This sequence in the N-terminal section; belongs to the MoaB/Mog family. In the C-terminal section; belongs to the MoeA family. Homotrimer, homodimer and homooligomer. Interacts with glycine receptors. Mg(2+) serves as cofactor.

Its subcellular location is the postsynaptic cell membrane. It is found in the cell membrane. The protein localises to the cytoplasm. It localises to the cytosol. The protein resides in the cytoskeleton. Its subcellular location is the cell projection. It is found in the dendrite. The protein localises to the postsynaptic density. It carries out the reaction molybdopterin + ATP + H(+) = adenylyl-molybdopterin + diphosphate. The catalysed reaction is adenylyl-molybdopterin + molybdate = Mo-molybdopterin + AMP + H(+). The protein operates within cofactor biosynthesis; molybdopterin biosynthesis. Microtubule-associated protein involved in membrane protein-cytoskeleton interactions. It is thought to anchor the inhibitory glycine receptor (GLYR) to subsynaptic microtubules. Acts as a major instructive molecule at inhibitory synapses, where it also clusters GABA type A receptors. In terms of biological role, also has a catalytic activity and catalyzes two steps in the biosynthesis of the molybdenum cofactor. In the first step, molybdopterin is adenylated. Subsequently, molybdate is inserted into adenylated molybdopterin and AMP is released. This chain is Gephyrin (GPHN), found in Gallus gallus (Chicken).